The following is a 393-amino-acid chain: Major outer membrane porin, serovar L1 (393 aa).

The N-terminal stretch at 1 to 22 (MKKLLKSVLVFAALSSASSLQA) is a signal peptide.

This sequence belongs to the chlamydial porin (CP) (TC 1.B.2) family. Part of a disulfide cross-linked outer membrane complex (COMC) composed of the major outer membrane porin (MOMP), the small cysteine-rich protein (OmcA) and the large cysteine-rich periplasmic protein (OmcB).

The protein resides in the cell outer membrane. In elementary bodies (EBs, the infectious stage, which is able to survive outside the host cell) provides the structural integrity of the outer envelope through disulfide cross-links with the small cysteine-rich protein and the large cysteine-rich periplasmic protein. It has been described in publications as the Sarkosyl-insoluble COMC (Chlamydia outer membrane complex), and serves as the functional equivalent of peptidoglycan. Functionally, permits diffusion of specific solutes through the outer membrane. This chain is Major outer membrane porin, serovar L1 (ompA), found in Chlamydia trachomatis.